A 530-amino-acid chain; its full sequence is Membrane-associated transporter protein (530 aa).

At 1-46 the chain is on the cytoplasmic side; the sequence is MGSNSGQAGRHIYKSLADDGPFDSVEPPKRPTSRLIMHSMAMFGRE. A helical membrane pass occupies residues 47–67; that stretch reads FCYAVEAAYVTPVLLSVGLPS. Position 68 (serine 68) is a topological domain, extracellular. Residues 69 to 89 form a helical membrane-spanning segment; it reads LYSIVWFLSPILGFLLQPVVG. Residues 90-110 are Cytoplasmic-facing; sequence SASDHCRSRWGRRRPYILTLG. A helical transmembrane segment spans residues 111–131; it reads VMMLVGMALYLNGATVVAALI. Topologically, residues 132–138 are extracellular; that stretch reads ANPRRKL. A helical transmembrane segment spans residues 139–159; that stretch reads VWAISVTMIGVVLFDFAADFI. Topologically, residues 160–184 are cytoplasmic; sequence DGPIKAYLFDVCSHQDKEKGLHYHA. The helical transmembrane segment at 185-205 threads the bilayer; it reads LFTGFGGALGYLLGAIDWAHL. Topologically, residues 206-216 are extracellular; sequence ELGRLLGTEFQ. Residues 217 to 237 form a helical membrane-spanning segment; the sequence is VMFFFSALVLTLCFTVHLCSI. Residues 238-318 lie on the Cytoplasmic side of the membrane; it reads SEAPLTEVAK…ALVNMPPHYR (81 aa). The chain crosses the membrane as a helical span at residues 319 to 339; it reads YLCISHLIGWTAFLSNMLFFT. Residues 340–366 lie on the Extracellular side of the membrane; that stretch reads DFMGQIVYRGDPYSAHNSTEFLIYERG. Asparagine 356 is a glycosylation site (N-linked (GlcNAc...) asparagine). A helical membrane pass occupies residues 367-387; sequence VEVGCWGLCINSVFSSLYSYF. Topologically, residues 388–398 are cytoplasmic; sequence QKVLVSYIGLK. A helical membrane pass occupies residues 399–419; it reads GLYFTGYLLFGLGTGFIGLFP. At 420–425 the chain is on the extracellular side; it reads NVYSTL. The chain crosses the membrane as a helical span at residues 426–446; sequence VLCSLFGVMSSTLYTVPFNLI. Over 447-477 the chain is Cytoplasmic; it reads TEYHREEEKERQQAPGGDPDNSVRGKGMDCA. The chain crosses the membrane as a helical span at residues 478-498; that stretch reads TLTCMVQLAQILVGGGLGFLV. At 499–504 the chain is on the extracellular side; that stretch reads NTAGTV. Residues 505–525 traverse the membrane as a helical segment; that stretch reads VVVVITASAVALIGCCFVALF. The Cytoplasmic segment spans residues 526–530; the sequence is VRYVD.

Belongs to the glycoside-pentoside-hexuronide (GPH) cation symporter transporter (TC 2.A.2) family. Interacts with TYRP1. In terms of tissue distribution, expressed in mature melanocytes.

The protein localises to the melanosome membrane. It carries out the reaction sucrose(out) + H(+)(out) = sucrose(in) + H(+)(in). The enzyme catalyses D-glucose(out) + H(+)(out) = D-glucose(in) + H(+)(in). Its function is as follows. Proton-associated glucose and sucrose transporter. May be able to transport also fructose. Expressed at a late melanosome maturation stage where functions as proton/glucose exporter which increase lumenal pH by decreasing glycolysis. Regulates melanogenesis by maintaining melanosome neutralization that is initially initiated by transient OCA2 and required for a proper function of the tyrosinase TYR. This Homo sapiens (Human) protein is Membrane-associated transporter protein.